Reading from the N-terminus, the 131-residue chain is ER membrane protein complex subunit 5 (131 aa).

Topologically, residues 1 to 3 (MAP) are cytoplasmic. The helical transmembrane segment at 4-22 (SLWKGLVGIGLFALAHAAL) threads the bilayer. Topologically, residues 23 to 43 (SAAQHRSYMRLTEKEDESLPI) are lumenal. A helical transmembrane segment spans residues 44-63 (DIVLQTLLAFAVTCYGIVHI). The Cytoplasmic portion of the chain corresponds to 64-131 (AGEFKDMDAT…KLRKLESLRR (68 aa)). A Phosphoserine modification is found at Ser-120.

The protein belongs to the membrane magnesium transporter (TC 1.A.67) family. Component of the ER membrane protein complex (EMC).

Its subcellular location is the endoplasmic reticulum membrane. It localises to the golgi apparatus membrane. The protein localises to the early endosome membrane. Part of the endoplasmic reticulum membrane protein complex (EMC) that enables the energy-independent insertion into endoplasmic reticulum membranes of newly synthesized membrane proteins. Preferentially accommodates proteins with transmembrane domains that are weakly hydrophobic or contain destabilizing features such as charged and aromatic residues. Involved in the cotranslational insertion of multi-pass membrane proteins in which stop-transfer membrane-anchor sequences become ER membrane spanning helices. It is also required for the post-translational insertion of tail-anchored/TA proteins in endoplasmic reticulum membranes. By mediating the proper cotranslational insertion of N-terminal transmembrane domains in an N-exo topology, with translocated N-terminus in the lumen of the ER, controls the topology of multi-pass membrane proteins like the G protein-coupled receptors. By regulating the insertion of various proteins in membranes, it is indirectly involved in many cellular processes. May be involved in Mg(2+) transport. The polypeptide is ER membrane protein complex subunit 5 (Pongo abelii (Sumatran orangutan)).